The following is a 910-amino-acid chain: Translation factor GUF1 homolog, mitochondrial (910 aa).

The disordered stretch occupies residues 126–188 (RRGNGLPFER…DGGGAPEHPQ (63 aa)). A tr-type G domain is found at 189-366 (QNVRNFCILA…RIVSDIPCPA (178 aa)). Residues 198–205 (AHIDSGKS), 259–263 (DTPGH), and 313–316 (NKID) each bind GTP. The disordered stretch occupies residues 639–683 (GSGDGRADGSADGSADGSADGSGDSSAHGSSDRRGAGCARGSDDI). The segment covering 646 to 667 (DGSADGSADGSADGSGDSSAHG) has biased composition (low complexity).

This sequence belongs to the TRAFAC class translation factor GTPase superfamily. Classic translation factor GTPase family. LepA subfamily.

The protein resides in the mitochondrion inner membrane. The catalysed reaction is GTP + H2O = GDP + phosphate + H(+). Functionally, promotes mitochondrial protein synthesis. May act as a fidelity factor of the translation reaction, by catalyzing a one-codon backward translocation of tRNAs on improperly translocated ribosomes. Binds to mitochondrial ribosomes in a GTP-dependent manner. This chain is Translation factor GUF1 homolog, mitochondrial, found in Plasmodium vivax (strain Salvador I).